Reading from the N-terminus, the 210-residue chain is T-cell surface glycoprotein CD8 beta chain (210 aa).

Residues 1-21 (MRPRLWLLLAAQLAVLHGSSV) form the signal peptide. One can recognise an Ig-like V-type domain in the interval 22-132 (LQQTPAYIKV…ELTFGKGTQL (111 aa)). At 22–170 (LQQTPAYIKV…ETQKGPLCSP (149 aa)) the chain is on the extracellular side. An intrachain disulfide couples cysteine 41 to cysteine 116. Residue asparagine 102 is glycosylated (N-linked (GlcNAc...) asparagine). The chain crosses the membrane as a helical span at residues 171–191 (ITLGLLVAGVLVLLVSLGVAI). Residues 192–210 (HLCCRRRRARLRFMKQFYK) are Cytoplasmic-facing.

In terms of assembly, forms disulfide-linked heterodimers with CD8A at the cell surface. Interacts with CD3D; this interaction couples TCR-CD3 with CD8. Interacts with LCK. In terms of processing, phosphorylated as a consequence of T-cell activation. Post-translationally, palmitoylated at the cytoplasmic tail and thereby targets the heterodimer CD8A/CD8B to lipid rafts unlike CD8A homodimers.

It is found in the cell membrane. In terms of biological role, integral membrane glycoprotein that plays an essential role in the immune response and serves multiple functions in responses against both external and internal offenses. In T-cells, functions primarily as a coreceptor for MHC class I molecule:peptide complex. The antigens presented by class I peptides are derived from cytosolic proteins while class II derived from extracellular proteins. Interacts simultaneously with the T-cell receptor (TCR) and the MHC class I proteins presented by antigen presenting cells (APCs). In turn, recruits the Src kinase LCK to the vicinity of the TCR-CD3 complex. A palmitoylation site in the cytoplasmic tail of CD8B chain contributes to partitioning of CD8 into the plasma membrane lipid rafts where signaling proteins are enriched. Once LCK recruited, it initiates different intracellular signaling pathways by phosphorylating various substrates ultimately leading to lymphokine production, motility, adhesion and activation of cytotoxic T-lymphocytes (CTLs). Additionally, plays a critical role in thymic selection of CD8+ T-cells. The chain is T-cell surface glycoprotein CD8 beta chain (CD8B) from Pongo pygmaeus (Bornean orangutan).